We begin with the raw amino-acid sequence, 333 residues long: Fructose-1,6-bisphosphatase class 1 1 (333 aa).

E81, D100, L102, and D103 together coordinate Mg(2+). Residues 103–106 (DGSS) and N191 each bind substrate. E263 contributes to the Mg(2+) binding site.

This sequence belongs to the FBPase class 1 family. Homotetramer. Requires Mg(2+) as cofactor.

It is found in the cytoplasm. The catalysed reaction is beta-D-fructose 1,6-bisphosphate + H2O = beta-D-fructose 6-phosphate + phosphate. The protein operates within carbohydrate biosynthesis; Calvin cycle. This chain is Fructose-1,6-bisphosphatase class 1 1, found in Cereibacter sphaeroides (strain ATCC 17025 / ATH 2.4.3) (Rhodobacter sphaeroides).